A 400-amino-acid polypeptide reads, in one-letter code: Protection of telomeres homolog 1 (400 aa).

Belongs to the telombin family. In terms of tissue distribution, expressed in sperm and oocytes.

Its subcellular location is the nucleus. It is found in the nucleus envelope. It localises to the chromosome. The protein localises to the telomere. Functionally, telomeric DNA-binding protein, which binds to single-stranded C-rich repeat sequences, with high specificity to the 5'-GCCTAA-3' sequence. Repeat sequence binding can be at the 5' or 3' telomeric end. May have a role in protecting the 5' end of the C-rich strand of the telomere. Acts redundantly with pot-2 to negatively regulate telomerase-mediated telomere extension. Also regulates telomere length by the telomerase-independent telomere maintenance pathway called ALT (alternative lengthening of telomeres). Through sun-1, anchors telomeres to the nuclear envelope in embryos. The protein is Protection of telomeres homolog 1 of Caenorhabditis elegans.